The following is a 149-amino-acid chain: Probable microsomal glutathione S-transferase (149 aa).

The next 2 helical transmembrane spans lie at Ser-7–Trp-27 and Leu-123–Leu-143.

This sequence belongs to the MAPEG family.

Its subcellular location is the membrane. It catalyses the reaction RX + glutathione = an S-substituted glutathione + a halide anion + H(+). Its function is as follows. May perform the conjugation of reduced glutathione to electrophiles. This Dictyostelium discoideum (Social amoeba) protein is Probable microsomal glutathione S-transferase (mgst).